A 419-amino-acid polypeptide reads, in one-letter code: Isocitrate dehydrogenase [NADP] 1 (419 aa).

Thr-105 is an NADP(+) binding site. 5 residues coordinate D-threo-isocitrate: Ser-114, Asn-116, Arg-120, Arg-130, and Arg-154. Residue Asp-308 participates in Mg(2+) binding. NADP(+) is bound by residues 340–346 (HGTAPKY), Asn-353, Tyr-392, and Arg-396.

Belongs to the isocitrate and isopropylmalate dehydrogenases family. Homodimer. Mg(2+) is required as a cofactor. Mn(2+) serves as cofactor.

It catalyses the reaction D-threo-isocitrate + NADP(+) = 2-oxoglutarate + CO2 + NADPH. Its activity is regulated as follows. IDH activity is not significantly affected by monovalent cations. The combined addition of Mn(2+) and another divalent cation results in the decrease of the activity. Functionally, catalyzes the oxidative decarboxylation of isocitrate to 2-oxoglutarate and carbon dioxide with the concomitant reduction of NADP(+). Cannot use NAD(+). The sequence is that of Isocitrate dehydrogenase [NADP] 1 from Psychrobacter sp. (strain 13A).